The primary structure comprises 299 residues: Protease HtpX homolog (299 aa).

2 helical membrane-spanning segments follow: residues 15–35 and 37–57; these read MFLT…VLWQ and GVSY…QYYF. A Zn(2+)-binding site is contributed by His140. Glu141 is an active-site residue. Residue His144 participates in Zn(2+) binding. The next 2 helical transmembrane spans lie at 158–178 and 187–207; these read FFAT…GAFG and NNIM…YFLI. Glu215 is a binding site for Zn(2+).

Belongs to the peptidase M48B family. The cofactor is Zn(2+).

It localises to the cell membrane. This is Protease HtpX homolog from Moorella thermoacetica (strain ATCC 39073 / JCM 9320).